The following is a 668-amino-acid chain: Fructose-1,6-bisphosphatase class 3 (668 aa).

It belongs to the FBPase class 3 family. It depends on Mn(2+) as a cofactor.

The catalysed reaction is beta-D-fructose 1,6-bisphosphate + H2O = beta-D-fructose 6-phosphate + phosphate. The protein operates within carbohydrate biosynthesis; gluconeogenesis. This chain is Fructose-1,6-bisphosphatase class 3, found in Clostridium botulinum (strain ATCC 19397 / Type A).